A 642-amino-acid polypeptide reads, in one-letter code: Threonine--tRNA ligase (642 aa).

The 61-residue stretch at 1-61 folds into the TGS domain; sequence MPVITLPDGS…ETDSTLSIIT (61 aa). The segment at 243–534 is catalytic; the sequence is DHRKIGKQLD…LTEEFAGFFP (292 aa). The Zn(2+) site is built by Cys334, His385, and His511.

The protein belongs to the class-II aminoacyl-tRNA synthetase family. Homodimer. Zn(2+) serves as cofactor.

It localises to the cytoplasm. It carries out the reaction tRNA(Thr) + L-threonine + ATP = L-threonyl-tRNA(Thr) + AMP + diphosphate + H(+). Catalyzes the attachment of threonine to tRNA(Thr) in a two-step reaction: L-threonine is first activated by ATP to form Thr-AMP and then transferred to the acceptor end of tRNA(Thr). Also edits incorrectly charged L-seryl-tRNA(Thr). The protein is Threonine--tRNA ligase of Klebsiella pneumoniae (strain 342).